The following is a 312-amino-acid chain: D-alanine--D-alanine ligase (312 aa).

The 201-residue stretch at 108–308 (KLVWQQTGIP…YSELVVKVLS (201 aa)) folds into the ATP-grasp domain. Residue 138 to 193 (AAKLGVPLFVKPASEGSSVAVEKVKSADALPAALEEAAKHDKIVIVEKSIEGGGEY) participates in ATP binding. D262, E275, and N277 together coordinate Mg(2+).

It belongs to the D-alanine--D-alanine ligase family. Mg(2+) is required as a cofactor. The cofactor is Mn(2+).

It localises to the cytoplasm. It carries out the reaction 2 D-alanine + ATP = D-alanyl-D-alanine + ADP + phosphate + H(+). Its pathway is cell wall biogenesis; peptidoglycan biosynthesis. Its function is as follows. Cell wall formation. The sequence is that of D-alanine--D-alanine ligase from Burkholderia pseudomallei (strain 668).